The primary structure comprises 316 residues: Methionyl-tRNA formyltransferase (316 aa).

113-116 provides a ligand contact to (6S)-5,6,7,8-tetrahydrofolate; that stretch reads SLLP.

It belongs to the Fmt family.

It carries out the reaction L-methionyl-tRNA(fMet) + (6R)-10-formyltetrahydrofolate = N-formyl-L-methionyl-tRNA(fMet) + (6S)-5,6,7,8-tetrahydrofolate + H(+). Its function is as follows. Attaches a formyl group to the free amino group of methionyl-tRNA(fMet). The formyl group appears to play a dual role in the initiator identity of N-formylmethionyl-tRNA by promoting its recognition by IF2 and preventing the misappropriation of this tRNA by the elongation apparatus. The polypeptide is Methionyl-tRNA formyltransferase (Proteus mirabilis (strain HI4320)).